An 840-amino-acid chain; its full sequence is Cullin-4 (840 aa).

Residues M1–T11 show a composition bias toward polar residues. The tract at residues M1 to T82 is disordered. Residues T33–G48 are compositionally biased toward basic and acidic residues. Residues F69–T82 are compositionally biased toward polar residues. The Cullin neddylation domain occupies D772 to E831. Residue K786 forms a Glycyl lysine isopeptide (Lys-Gly) (interchain with G-Cter in NEDD8) linkage.

This sequence belongs to the cullin family. Part of an E3 ubiquitin-protein ligase complex including cul-4 and ddb-1. Post-translationally, neddylated. Deneddylated via its interaction with the COP9 signalosome (CSN) complex.

It participates in protein modification; protein ubiquitination. In terms of biological role, component of cullin-based E3 ubiquitin-protein ligase complexes which mediate the ubiquitination and subsequent proteasomal degradation of target proteins. The functional specificity of the E3 ubiquitin-protein ligase complex depends on the variable substrate recognition component. In association with ddb-1 directs ubiquitination of cdt-1 during S phase and is required for restraining DNA rereplication. Probably is involved in ubiquitination of cki-1. This Caenorhabditis elegans protein is Cullin-4 (cul-4).